The chain runs to 248 residues: Probable transcriptional regulatory protein Oter_1471 (248 aa).

It belongs to the TACO1 family.

The protein resides in the cytoplasm. This Opitutus terrae (strain DSM 11246 / JCM 15787 / PB90-1) protein is Probable transcriptional regulatory protein Oter_1471.